A 648-amino-acid polypeptide reads, in one-letter code: Chaperone protein HtpG (648 aa).

The segment at 1–353 is a; substrate-binding; the sequence is MNARVEQLEF…AQDMSLNVSR (353 aa). The segment at 354-567 is b; it reads EILQQDRQIK…TFGITPALAR (214 aa). The interval 568-648 is c; that stretch reads IYRATGQDVP…LLADRLTRTL (81 aa).

Belongs to the heat shock protein 90 family. Homodimer.

The protein localises to the cytoplasm. Functionally, molecular chaperone. Has ATPase activity. The protein is Chaperone protein HtpG of Mycobacterium ulcerans (strain Agy99).